The chain runs to 24 residues: Fraternine (24 aa).

A disulfide bridge connects residues Cys11 and Cys24. A Cysteine amide modification is found at Cys24.

As to expression, expressed by the venom gland.

The protein resides in the secreted. Functionally, wasp venom peptide that acts as a potent mast cell degranulating peptide without hemolytic activity. Shows neuroprotective effect, since it prevents the death of dopaminergic neurons of the brain substantia nigra region and recovers motor deficit in a 6-hydroxydopamine (6-OHDA)-induced murine model of Parkinson disease. The sequence is that of Fraternine from Parachartergus fraternus (Artistic wasp).